A 492-amino-acid chain; its full sequence is Ribose import ATP-binding protein RbsA (492 aa).

2 consecutive ABC transporter domains span residues 3-239 and 249-492; these read IEMK…VGRS and AEIR…TGGK. An ATP-binding site is contributed by 35-42; it reads GENGAGKS.

It belongs to the ABC transporter superfamily. Ribose importer (TC 3.A.1.2.1) family. In terms of assembly, the complex is composed of an ATP-binding protein (RbsA), two transmembrane proteins (RbsC) and a solute-binding protein (RbsB).

It localises to the cell membrane. The enzyme catalyses D-ribose(out) + ATP + H2O = D-ribose(in) + ADP + phosphate + H(+). Part of the ABC transporter complex RbsABC involved in ribose import. Responsible for energy coupling to the transport system. The chain is Ribose import ATP-binding protein RbsA from Lactococcus lactis subsp. cremoris (strain SK11).